The chain runs to 155 residues: Interleukin-2 (155 aa).

An N-terminal signal peptide occupies residues methionine 1–serine 20. O-linked (GalNAc...) threonine glycosylation occurs at threonine 23. Residues cysteine 79 and cysteine 127 are joined by a disulfide bond.

Belongs to the IL-2 family.

The protein localises to the secreted. Its function is as follows. Cytokine produced by activated CD4-positive helper T-cells and to a lesser extend activated CD8-positive T-cells and natural killer (NK) cells that plays pivotal roles in the immune response and tolerance. Binds to a receptor complex composed of either the high-affinity trimeric IL-2R (IL2RA/CD25, IL2RB/CD122 and IL2RG/CD132) or the low-affinity dimeric IL-2R (IL2RB and IL2RG). Interaction with the receptor leads to oligomerization and conformation changes in the IL-2R subunits resulting in downstream signaling starting with phosphorylation of JAK1 and JAK3. In turn, JAK1 and JAK3 phosphorylate the receptor to form a docking site leading to the phosphorylation of several substrates including STAT5. This process leads to activation of several pathways including STAT, phosphoinositide-3-kinase/PI3K and mitogen-activated protein kinase/MAPK pathways. Functions as a T-cell growth factor and can increase NK-cell cytolytic activity as well. Promotes strong proliferation of activated B-cells and subsequently immunoglobulin production. Plays a pivotal role in regulating the adaptive immune system by controlling the survival and proliferation of regulatory T-cells, which are required for the maintenance of immune tolerance. Moreover, participates in the differentiation and homeostasis of effector T-cell subsets, including Th1, Th2, Th17 as well as memory CD8-positive T-cells. This is Interleukin-2 (IL2) from Halichoerus grypus (Gray seal).